The primary structure comprises 130 residues: Small ribosomal subunit protein uS11 (130 aa).

It belongs to the universal ribosomal protein uS11 family. As to quaternary structure, part of the 30S ribosomal subunit. Interacts with proteins S7 and S18. Binds to IF-3.

Located on the platform of the 30S subunit, it bridges several disparate RNA helices of the 16S rRNA. Forms part of the Shine-Dalgarno cleft in the 70S ribosome. In Syntrophobacter fumaroxidans (strain DSM 10017 / MPOB), this protein is Small ribosomal subunit protein uS11.